The sequence spans 207 residues: Small ribosomal subunit protein uS4 (207 aa).

The disordered stretch occupies residues 31–53 (KAKFDSKPGQHGRTSGTRTSDFG). The span at 42 to 52 (GRTSGTRTSDF) shows a compositional bias: polar residues. In terms of domain architecture, S4 RNA-binding spans 97-158 (SRLDNVVYRM…KSKKQTRVTE (62 aa)).

This sequence belongs to the universal ribosomal protein uS4 family. As to quaternary structure, part of the 30S ribosomal subunit. Contacts protein S5. The interaction surface between S4 and S5 is involved in control of translational fidelity.

One of the primary rRNA binding proteins, it binds directly to 16S rRNA where it nucleates assembly of the body of the 30S subunit. In terms of biological role, with S5 and S12 plays an important role in translational accuracy. This chain is Small ribosomal subunit protein uS4, found in Polaromonas sp. (strain JS666 / ATCC BAA-500).